The primary structure comprises 229 residues: MSDSQEIPYHNQLKNRFRGYFPVIIDVETAGFDAKKDALLELAAITLKMDENGYLHPDQKCHFHIKPFEGANINPESLKFNGIDIHNPLRGAVSELDAITGLFQMVRRGQKDADCQRSIIVAHNAAFDQSFVMAAAERTGVKRNPFHPFGMFDTASLAGLMFGQTVLVKACQAAKIPFDGKQAHSALYDTERTAKLFCYMVNHLKDLGGFPHIASELEQEKTTEKETAL.

An Exonuclease domain is found at Val-23 to Phe-197. Positions 26, 28, 184, and 189 each coordinate Mg(2+). His-184 functions as the Proton donor/acceptor in the catalytic mechanism.

The protein belongs to the RNase T family. In terms of assembly, homodimer. The cofactor is Mg(2+).

In terms of biological role, trims short 3' overhangs of a variety of RNA species, leaving a one or two nucleotide 3' overhang. Responsible for the end-turnover of tRNA: specifically removes the terminal AMP residue from uncharged tRNA (tRNA-C-C-A). Also appears to be involved in tRNA biosynthesis. This chain is Ribonuclease T, found in Haemophilus influenzae (strain ATCC 51907 / DSM 11121 / KW20 / Rd).